Here is a 113-residue protein sequence, read N- to C-terminus: Large ribosomal subunit protein bL19 (113 aa).

This sequence belongs to the bacterial ribosomal protein bL19 family.

In terms of biological role, this protein is located at the 30S-50S ribosomal subunit interface and may play a role in the structure and function of the aminoacyl-tRNA binding site. The polypeptide is Large ribosomal subunit protein bL19 (Corynebacterium jeikeium (strain K411)).